Here is a 336-residue protein sequence, read N- to C-terminus: Fructose-1,6-bisphosphatase class 1 (336 aa).

Glu92, Asp115, Leu117, and Asp118 together coordinate Mg(2+). Substrate contacts are provided by residues 118-121, Asn211, Tyr244, 262-264, and Lys274; these read DGSS and YLY. Glu280 contributes to the Mg(2+) binding site.

The protein belongs to the FBPase class 1 family. Homotetramer. The cofactor is Mg(2+).

The protein resides in the cytoplasm. It carries out the reaction beta-D-fructose 1,6-bisphosphate + H2O = beta-D-fructose 6-phosphate + phosphate. Its pathway is carbohydrate biosynthesis; gluconeogenesis. In Hahella chejuensis (strain KCTC 2396), this protein is Fructose-1,6-bisphosphatase class 1.